A 326-amino-acid polypeptide reads, in one-letter code: Heat-inducible transcription repressor HrcA (326 aa).

This sequence belongs to the HrcA family.

Functionally, negative regulator of class I heat shock genes (grpE-dnaK-dnaJ and groELS operons). Prevents heat-shock induction of these operons. This Staphylococcus saprophyticus subsp. saprophyticus (strain ATCC 15305 / DSM 20229 / NCIMB 8711 / NCTC 7292 / S-41) protein is Heat-inducible transcription repressor HrcA.